The chain runs to 1182 residues: Tyrosine-protein kinase ABL2 (1182 aa).

Disordered regions lie at residues 1–47 (MGQQ…TGFN) and 60–80 (EDGFEGDKTGGSSPEALHRPY). A lipid anchor (N-myristoyl glycine) is attached at G2. The segment at 2 to 106 (GQQVGRVGEA…SKENLLGATE (105 aa)) is CAP. Residues 20–30 (RGIRGSSAARP) show a composition bias toward low complexity. At S97 the chain carries Phosphoserine. Positions 107–167 (SDPNLFVALY…PSNYITPVNS (61 aa)) constitute an SH3 domain. Phosphotyrosine is present on residues Y116, Y161, Y174, Y185, Y218, and Y231. Positions 173–263 (WYHGPVSRSA…GLVTTLHYPA (91 aa)) constitute an SH2 domain. Y261 bears the Phosphotyrosine; by ABL1 and autocatalysis mark. Residue Y272 is modified to Phosphotyrosine; by autocatalysis. S275 carries the phosphoserine modification. The region spanning 288–539 (ITMKHKLGGG…PSFAETHQAF (252 aa)) is the Protein kinase domain. ATP is bound at residue 294–302 (LGGGQYGEV). Phosphotyrosine is present on residues Y299 and Y303. Residues K317 and 362 to 368 (EYMPYGN) contribute to the ATP site. Catalysis depends on D409, which acts as the Proton acceptor. A Kinase activation loop motif is present at residues 427–451 (DFGLSRLMTGDTYTAHAGAKFPIKW). Position 439 is a phosphotyrosine; by autocatalysis and SRC-type Tyr-kinases (Y439). Y459 carries the phosphotyrosine modification. Y568 carries the post-translational modification Phosphotyrosine; by autocatalysis. The disordered stretch occupies residues 611-641 (IRGAQASSGSPALPRKQRDKSPSSLLEDAKE). Phosphoserine is present on residues S620, S631, and S633. D647 is subject to Phosphotyrosine. Residues 654-674 (SSFMKKRNAPTPPKRSSSFRE) form a disordered region. Residue S655 is modified to Phosphoserine. The Nuclear localization signal motif lies at 658–660 (KKR). A phosphotyrosine mark is found at A662 and R668. A phosphoserine mark is found at S669, S670, and S671. Phosphotyrosine is present on residues Y683 and Y718. Phosphotyrosine; by autocatalysis is present on Y683. Residues 694-930 (SLQHADGFSF…PVLPTTHNHK (237 aa)) are F-actin-binding. A disordered region spans residues 763 to 794 (LRAGKPTASDDTSKPFPRSNSTSSMSSGLPEQ). N6-acetyllysine is present on K776. Over residues 780–791 (RSNSTSSMSSGL) the composition is skewed to polar residues. S783 carries the post-translational modification Phosphoserine. T800 bears the Phosphothreonine mark. Over residues 807-823 (RSKLQLERTVSTSSQPE) the composition is skewed to polar residues. Positions 807–851 (RSKLQLERTVSTSSQPEENVDRANDMLPKKSEESAAPSRERPKAK) are disordered. Phosphoserine occurs at positions 817 and 820. Basic and acidic residues predominate over residues 825-849 (NVDRANDMLPKKSEESAAPSRERPK). S915 and S936 each carry phosphoserine. Residues 964-1024 (HQVTSSGDKD…TSETQEGGKK (61 aa)) are disordered. Over residues 1010-1019 (TAGQSTSETQ) the composition is skewed to polar residues. The interval 1020–1182 (EGGKKAALGA…VQEISDVVQR (163 aa)) is F-actin-binding.

It belongs to the protein kinase superfamily. Tyr protein kinase family. ABL subfamily. As to quaternary structure, interacts with PSMA7. Interacts with CTTN. Found in a complex with ABL1, ABL2, CRK and UNC119; leading to the inhibition of CRK phosphorylation by ABL kinases. Mg(2+) is required as a cofactor. Mn(2+) serves as cofactor. In terms of processing, phosphorylated at Tyr-261 by ABL1 in response to oxidative stress. Phosphorylated by PDGFRB. Post-translationally, polyubiquitinated. Polyubiquitination of ABL2 leads to degradation. Widely expressed.

Its subcellular location is the cytoplasm. It is found in the cytoskeleton. It catalyses the reaction L-tyrosyl-[protein] + ATP = O-phospho-L-tyrosyl-[protein] + ADP + H(+). Stabilized in the inactive form by an association between the SH3 domain and the SH2-TK linker region, interactions of the N-terminal cap, and contributions from an N-terminal myristoyl group and phospholipids. Activated by autophosphorylation as well as by SRC-family kinase-mediated phosphorylation. Activated by RIN1 binding to the SH2 and SH3 domains. Inhibited by imatinib mesylate (Gleevec) which is used for the treatment of chronic myeloid leukemia (CML). Phosphatidylinositol 4,5-bisphosphate (PIP2), a highly abundant phosphoinositide known to regulate cytoskeletal and membrane proteins, inhibits the tyrosine kinase activity. Functionally, non-receptor tyrosine-protein kinase that plays an ABL1-overlapping role in key processes linked to cell growth and survival such as cytoskeleton remodeling in response to extracellular stimuli, cell motility and adhesion and receptor endocytosis. Coordinates actin remodeling through tyrosine phosphorylation of proteins controlling cytoskeleton dynamics like MYH10 (involved in movement); CTTN (involved in signaling); or TUBA1 and TUBB (microtubule subunits). Binds directly F-actin and regulates actin cytoskeletal structure through its F-actin-bundling activity. Involved in the regulation of cell adhesion and motility through phosphorylation of key regulators of these processes such as CRK, CRKL, DOK1 or ARHGAP35. Adhesion-dependent phosphorylation of ARHGAP35 promotes its association with RASA1, resulting in recruitment of ARHGAP35 to the cell periphery where it inhibits RHO. Phosphorylates multiple receptor tyrosine kinases like PDGFRB and other substrates which are involved in endocytosis regulation such as RIN1. In brain, may regulate neurotransmission by phosphorylating proteins at the synapse. ABL2 also acts as a regulator of multiple pathological signaling cascades during infection. Pathogens can highjack ABL2 kinase signaling to reorganize the host actin cytoskeleton for multiple purposes, like facilitating intracellular movement and host cell exit. Finally, functions as its own regulator through autocatalytic activity as well as through phosphorylation of its inhibitor, ABI1. Positively regulates chemokine-mediated T-cell migration, polarization, and homing to lymph nodes and immune-challenged tissues, potentially via activation of NEDD9/HEF1 and RAP1. The sequence is that of Tyrosine-protein kinase ABL2 (ABL2) from Homo sapiens (Human).